The primary structure comprises 312 residues: Mevalonate kinase (312 aa).

104–114 (PISCGLGSSAS) serves as a coordination point for ATP. Asp155 (proton acceptor) is an active-site residue.

It belongs to the GHMP kinase family. Mevalonate kinase subfamily. In terms of assembly, homodimer. Mg(2+) serves as cofactor.

Its subcellular location is the cytoplasm. The catalysed reaction is (R)-mevalonate + ATP = (R)-5-phosphomevalonate + ADP + H(+). It participates in isoprenoid biosynthesis; isopentenyl diphosphate biosynthesis via mevalonate pathway; isopentenyl diphosphate from (R)-mevalonate: step 1/3. Farnesyl- and geranyl-pyrophosphates are competitive inhibitors. Slightly inhibited by high concentration of ATP. Functionally, catalyzes the phosphorylation of (R)-mevalonate (MVA) to (R)-mevalonate 5-phosphate (MVAP). Functions in the mevalonate (MVA) pathway leading to isopentenyl diphosphate (IPP), a key precursor for the biosynthesis of isoprenoid compounds such as archaeal membrane lipids. The chain is Mevalonate kinase from Methanocaldococcus jannaschii (strain ATCC 43067 / DSM 2661 / JAL-1 / JCM 10045 / NBRC 100440) (Methanococcus jannaschii).